A 90-amino-acid polypeptide reads, in one-letter code: U-scoloptoxin(15)-Sa3a (90 aa).

The N-terminal stretch at 1–18 (MKMVYLGLFLIITSCVIS) is a signal peptide.

The protein belongs to the scoloptoxin-15 family. Post-translationally, contains 3 disulfide bonds. In terms of tissue distribution, expressed by the venom gland.

It localises to the secreted. This is U-scoloptoxin(15)-Sa3a from Scolopendra alternans (Florida Keys giant centipede).